The sequence spans 201 residues: MQYPEPIAKLIDSYTKLPGIGPKTATRLAFYTLGMNEEDVQDFSKALISAKTDLTFCSICGNITATDTDPCVICRDQSRDQSTVFVVENSRDVMAMENTRDYHGLYHVLNGVISPSAGTGPEDINLPSLIRRLSEHEEIKEVIVGTNANAEGEATAMYLARLLKPAGIAVTRLAHGLAVGSDIDYADELTLIKAVQGRTKL.

The C4-type zinc-finger motif lies at 57–74; that stretch reads CSICGNITATDTDPCVIC. Residues 82 to 178 form the Toprim domain; sequence STVFVVENSR…AVTRLAHGLA (97 aa).

Belongs to the RecR family.

In terms of biological role, may play a role in DNA repair. It seems to be involved in an RecBC-independent recombinational process of DNA repair. It may act with RecF and RecO. In Leuconostoc mesenteroides subsp. mesenteroides (strain ATCC 8293 / DSM 20343 / BCRC 11652 / CCM 1803 / JCM 6124 / NCDO 523 / NBRC 100496 / NCIMB 8023 / NCTC 12954 / NRRL B-1118 / 37Y), this protein is Recombination protein RecR.